Consider the following 362-residue polypeptide: Metacaspase-3 (362 aa).

Residues H174 and C230 contribute to the active site.

Belongs to the peptidase C14B family.

The protein is Metacaspase-3 (AMC3) of Arabidopsis thaliana (Mouse-ear cress).